Consider the following 275-residue polypeptide: 2,3,4,5-tetrahydropyridine-2,6-dicarboxylate N-succinyltransferase (275 aa).

The substrate site is built by Arg-105 and Asp-142.

The protein belongs to the transferase hexapeptide repeat family. As to quaternary structure, homotrimer.

The protein localises to the cytoplasm. It carries out the reaction (S)-2,3,4,5-tetrahydrodipicolinate + succinyl-CoA + H2O = (S)-2-succinylamino-6-oxoheptanedioate + CoA. Its pathway is amino-acid biosynthesis; L-lysine biosynthesis via DAP pathway; LL-2,6-diaminopimelate from (S)-tetrahydrodipicolinate (succinylase route): step 1/3. This is 2,3,4,5-tetrahydropyridine-2,6-dicarboxylate N-succinyltransferase from Histophilus somni (strain 129Pt) (Haemophilus somnus).